We begin with the raw amino-acid sequence, 61 residues long: Putative defensin-like protein 72 (61 aa).

Disulfide bonds link C21–C59, C25–C48, C34–C57, and C38–C58.

The protein belongs to the DEFL family.

This Arabidopsis thaliana (Mouse-ear cress) protein is Putative defensin-like protein 72.